A 659-amino-acid polypeptide reads, in one-letter code: Putative RING finger protein R311 (659 aa).

The segment at 502–540 (CPVCYDDDYIKTKLICGHTVCLTCVLNILPNSKGCPLCM) adopts an RING-type zinc-finger fold.

The sequence is that of Putative RING finger protein R311 from Acanthamoeba polyphaga (Amoeba).